An 807-amino-acid chain; its full sequence is MSTGHTIYHSLLKLPLSVMVKSSSIPSNPIEDLNIDLERPIIYALPFRSHVDLLTLQKSALELGLPDPLSPIEIEGVKYPRYVFTSIGPKMFDTDDDLPQESLDLFKIVLKHHADNPDADFQLIPTSILWGRKPGKEGTSKPHLMPLNGPQKFVTLIKAGRDSTVRISPVVSLRYMADNHGSDEAIAHKLARVAKIHFSRQKLAASGPNLPNRQALFNRLLKSQAIEKVILEEAKSRNVDVEKVRKEAMGIMEEIATNFSYSLIKNGNRILKWLWNRLYQGLNINNASTVRKLAQEGHEIVYVPCHRSHMDYLLLSYVLYHEGLVPPHIAAGINLNFFPAGPIFRRGGAFFIRRSFKGNRLYSTIFREYLAELFAKGYSVEYFSEGGRSRTGRLLQAKTGMLAMTVQAMLRGLNRPVTLVPVYIGYEHVMEVTTYAKELRGKRKEKENAGQVLRTLRKLRNFGQGYVNFGEPISLNHYLNEHAPNWSESINPIEPQKPEWMTPVVNGIANKMMTHINDAAAANALTLCATALLAANQRALSKEDLTEQLDCYLQILRNVPYSATATVPSEDADALLEHAIKLDKFVIEKDTLGEIVSLDRNQSLLMTYYRNNIIHLFALPSLIAKLVVHHDTITVEQIQEQIKLIYPFLKAELFLHYEEDELASIVNNHIDELVQQNLILRDGDTLQLCNANIRKLHLLAHTISETLQRYAIALTHLQASPDLGKDELEEQSQIMAQRLSRLHGINAPEFFDKGVFCILFNTLKTEGYLDEDGAAVLSKVEPLSQDIAHLLTPEIKLTIHAVMTKED.

The HXXXXD motif signature appears at 305–310 (CHRSHM).

This sequence belongs to the GPAT/DAPAT family.

The protein localises to the cell inner membrane. The enzyme catalyses sn-glycerol 3-phosphate + an acyl-CoA = a 1-acyl-sn-glycero-3-phosphate + CoA. The protein operates within phospholipid metabolism; CDP-diacylglycerol biosynthesis; CDP-diacylglycerol from sn-glycerol 3-phosphate: step 1/3. This chain is Glycerol-3-phosphate acyltransferase, found in Aliivibrio fischeri (strain MJ11) (Vibrio fischeri).